Reading from the N-terminus, the 93-residue chain is Small ribosomal subunit protein uS19 (93 aa).

This sequence belongs to the universal ribosomal protein uS19 family.

In terms of biological role, protein S19 forms a complex with S13 that binds strongly to the 16S ribosomal RNA. The sequence is that of Small ribosomal subunit protein uS19 from Synechococcus sp. (strain JA-3-3Ab) (Cyanobacteria bacterium Yellowstone A-Prime).